Consider the following 126-residue polypeptide: uncharacterized protein (126 aa).

Disordered regions lie at residues 15 to 72 (PEWG…SDPQ) and 93 to 126 (TQIP…TTSN). Basic and acidic residues-rich tracts occupy residues 29–46 (DPLD…RVPE) and 55–64 (VQEDSREHGQ).

This is an uncharacterized protein from Homo sapiens (Human).